A 413-amino-acid chain; its full sequence is uncharacterized protein (413 aa).

Lys265 is modified (N6-(pyridoxal phosphate)lysine).

It belongs to the threonine aldolase family. It depends on pyridoxal 5'-phosphate as a cofactor.

This is an uncharacterized protein from Caenorhabditis elegans.